We begin with the raw amino-acid sequence, 177 residues long: Large ribosomal subunit protein uL6 (177 aa).

This sequence belongs to the universal ribosomal protein uL6 family. Part of the 50S ribosomal subunit.

In terms of biological role, this protein binds to the 23S rRNA, and is important in its secondary structure. It is located near the subunit interface in the base of the L7/L12 stalk, and near the tRNA binding site of the peptidyltransferase center. The sequence is that of Large ribosomal subunit protein uL6 from Methylobacillus flagellatus (strain ATCC 51484 / DSM 6875 / VKM B-1610 / KT).